A 197-amino-acid chain; its full sequence is Large ribosomal subunit protein mL58 (197 aa).

The transit peptide at 1 to 20 (MLFTIKPSFLKPVGFIQTRN) directs the protein to the mitochondrion.

The protein belongs to the mitochondrion-specific ribosomal protein mL58 family. In terms of assembly, component of the mitochondrial large ribosomal subunit (mt-LSU). Mature yeast 74S mitochondrial ribosomes consist of a small (37S) and a large (54S) subunit. The 37S small subunit contains a 15S ribosomal RNA (15S mt-rRNA) and at least 32 different proteins. The 54S large subunit contains a 21S rRNA (21S mt-rRNA) and at least 45 different proteins.

The protein resides in the mitochondrion. Component of the mitochondrial ribosome (mitoribosome), a dedicated translation machinery responsible for the synthesis of mitochondrial genome-encoded proteins, including at least some of the essential transmembrane subunits of the mitochondrial respiratory chain. The mitoribosomes are attached to the mitochondrial inner membrane and translation products are cotranslationally integrated into the membrane. The protein is Large ribosomal subunit protein mL58 (mrpl20) of Schizosaccharomyces pombe (strain 972 / ATCC 24843) (Fission yeast).